The sequence spans 361 residues: tRNA N6-adenosine threonylcarbamoyltransferase (361 aa).

Residues His-110 and His-114 each contribute to the Fe cation site. Substrate contacts are provided by residues 132-136 (LVSGG), Asp-165, Gly-178, Asp-182, and Asn-289. Position 317 (Asp-317) interacts with Fe cation.

The protein belongs to the KAE1 / TsaD family. It depends on Fe(2+) as a cofactor.

It is found in the cytoplasm. It carries out the reaction L-threonylcarbamoyladenylate + adenosine(37) in tRNA = N(6)-L-threonylcarbamoyladenosine(37) in tRNA + AMP + H(+). In terms of biological role, required for the formation of a threonylcarbamoyl group on adenosine at position 37 (t(6)A37) in tRNAs that read codons beginning with adenine. Is involved in the transfer of the threonylcarbamoyl moiety of threonylcarbamoyl-AMP (TC-AMP) to the N6 group of A37, together with TsaE and TsaB. TsaD likely plays a direct catalytic role in this reaction. The protein is tRNA N6-adenosine threonylcarbamoyltransferase of Nitratidesulfovibrio vulgaris (strain ATCC 29579 / DSM 644 / CCUG 34227 / NCIMB 8303 / VKM B-1760 / Hildenborough) (Desulfovibrio vulgaris).